The chain runs to 80 residues: Putative defensin-like protein 15 (80 aa).

The N-terminal stretch at 1 to 29 (MAKFASIITFIYAALVLFAAFEVPTMVEA) is a signal peptide. Q30 carries the pyrrolidone carboxylic acid modification. 4 disulfide bridges follow: C33-C80, C44-C65, C50-C74, and C54-C76.

It belongs to the DEFL family.

Its subcellular location is the secreted. Confers broad-spectrum resistance to pathogens. The chain is Putative defensin-like protein 15 (PDF1.2B) from Arabidopsis thaliana (Mouse-ear cress).